We begin with the raw amino-acid sequence, 418 residues long: Light-independent protochlorophyllide reductase subunit N (418 aa).

[4Fe-4S] cluster-binding residues include Cys-17, Cys-42, and Cys-103.

Belongs to the BchN/ChlN family. Protochlorophyllide reductase is composed of three subunits; ChlL, ChlN and ChlB. Forms a heterotetramer of two ChlB and two ChlN subunits. The cofactor is [4Fe-4S] cluster.

The enzyme catalyses chlorophyllide a + oxidized 2[4Fe-4S]-[ferredoxin] + 2 ADP + 2 phosphate = protochlorophyllide a + reduced 2[4Fe-4S]-[ferredoxin] + 2 ATP + 2 H2O. It participates in porphyrin-containing compound metabolism; chlorophyll biosynthesis (light-independent). In terms of biological role, component of the dark-operative protochlorophyllide reductase (DPOR) that uses Mg-ATP and reduced ferredoxin to reduce ring D of protochlorophyllide (Pchlide) to form chlorophyllide a (Chlide). This reaction is light-independent. The NB-protein (ChlN-ChlB) is the catalytic component of the complex. In Prochlorococcus marinus (strain MIT 9312), this protein is Light-independent protochlorophyllide reductase subunit N.